A 959-amino-acid polypeptide reads, in one-letter code: Kinesin-like protein NACK1 (959 aa).

Positions 1-28 (MTVRTPGTPASKIDKTPATTPNGHRGRE) are disordered. The Kinesin motor domain maps to 30 to 353 (KIVVTVRLRP…LYFATRAKEV (324 aa)). 117–124 (GQTSSGKT) lines the ATP pocket. Phosphothreonine is present on threonine 145. A coiled-coil region spans residues 362 to 429 (VVSDKQLVKH…LRRKLQEEQG (68 aa)). 4 disordered regions span residues 417-438 (VDEL…SVSP), 451-473 (SPNL…GRQS), 598-640 (LPSN…FLKS), and 658-700 (NRAP…SVNM). Basic and acidic residues-rich tracts occupy residues 418–429 (DELRRKLQEEQG) and 454–466 (LEEK…ERTR). Residues 557–598 (KSVSANLKEEIARLHSQGSTIADLEEQLENVQKSLDKLVMSL) adopt a coiled-coil conformation. Residues 600–611 (SNNDQQSNNDTT) are compositionally biased toward low complexity. The span at 613–623 (KAKHPSKKKKL) shows a compositional bias: basic residues. Positions 630–640 (NSINRQNFLKS) are enriched in polar residues. A phosphothreonine mark is found at threonine 675 and threonine 690. The tract at residues 685–756 (SSKEGTPYRR…EANEAAGYNL (72 aa)) is required for the binding to NPK1.

The protein belongs to the TRAFAC class myosin-kinesin ATPase superfamily. Kinesin family. KIN-7 subfamily. Interacts (via C-terminus) with NPK1 (via C-terminus). Phosphorylated at Thr-145, Thr-675 and Thr-690 by CDKAs and CDKBs. The phosphorylation occurs before metaphase and inhibits the interaction with NPK1 preventing the transition to cytokinesis.

Its subcellular location is the cytoplasm. The protein localises to the nucleus. It localises to the cytoskeleton. The protein resides in the phragmoplast. In terms of biological role, probable plus end-directed motor protein that functions in the NACK-PQR (NPK1-NQK1/MEK1-NRK1) MAP kinase signaling pathway, which is essential for somatic cell cytokinesis, especially for the cell-plate formation and its expansion. Regulates the activity and the localization of NPK1 by association through the non-catalytic region of the kinase. In Nicotiana tabacum (Common tobacco), this protein is Kinesin-like protein NACK1 (NACK1).